The chain runs to 447 residues: Argininosuccinate lyase (447 aa).

The protein belongs to the lyase 1 family. Argininosuccinate lyase subfamily.

It is found in the cytoplasm. It carries out the reaction 2-(N(omega)-L-arginino)succinate = fumarate + L-arginine. Its pathway is amino-acid biosynthesis; L-arginine biosynthesis; L-arginine from L-ornithine and carbamoyl phosphate: step 3/3. The protein is Argininosuccinate lyase of Bacteroides fragilis (strain ATCC 25285 / DSM 2151 / CCUG 4856 / JCM 11019 / LMG 10263 / NCTC 9343 / Onslow / VPI 2553 / EN-2).